Here is a 335-residue protein sequence, read N- to C-terminus: MSLDIDQIALHQLIKRDEQNLELVLRESLLEPNATVVEMMAELHRVYSAKSKAYGLFNEESELAQALRLQRQGEEEFLAFSRAATGRLRDELAKYPFAEGGIVLFCQYRYLAVEYLLVAVLNNLSSMRVNEELDIRSTHYLDINHADIVARIDLTEWETNPESTRYLTFLKGRVGRKVADFFMDFLGASEGLNAKAQNRGLLQAVDDFAADAQLDKSERQNVRQQVYAYCNEQLQAGEEIELESLSKELAGVSEKSFQEFTAAQGYELEESFPADRSTLRQLTKFAGSGGGLTINFDAMLLGERVFWDPATDTLTIKGTPPNLRDQLQRRTSGGN.

It belongs to the YejK family.

It localises to the cytoplasm. The protein resides in the nucleoid. The sequence is that of Nucleoid-associated protein KPK_1538 from Klebsiella pneumoniae (strain 342).